The chain runs to 341 residues: 4-hydroxy-2-oxovalerate aldolase (341 aa).

Residues 5–257 enclose the Pyruvate carboxyltransferase domain; the sequence is ITLHDMTLRD…ETGVDVFRIA (253 aa). Substrate is bound at residue 13-14; the sequence is RD. Residue Asp-14 coordinates Mn(2+). The Proton acceptor role is filled by His-17. 2 residues coordinate substrate: Ser-167 and His-196. Residues His-196 and His-198 each coordinate Mn(2+). Tyr-287 lines the substrate pocket.

This sequence belongs to the 4-hydroxy-2-oxovalerate aldolase family.

The catalysed reaction is (S)-4-hydroxy-2-oxopentanoate = acetaldehyde + pyruvate. This Cupriavidus taiwanensis (strain DSM 17343 / BCRC 17206 / CCUG 44338 / CIP 107171 / LMG 19424 / R1) (Ralstonia taiwanensis (strain LMG 19424)) protein is 4-hydroxy-2-oxovalerate aldolase (mhpE).